Here is an 868-residue protein sequence, read N- to C-terminus: Rifampicin phosphotransferase (868 aa).

Residues 5-317 (TERYVLDLQE…FHIVQSRPIT (313 aa)) are ATP-binding. ATP is bound by residues lysine 26, arginine 120, glycine 135, threonine 139, glutamine 186, glutamate 300, glutamine 312, and arginine 314. Positions 330-755 (NHVYVSVGHQ…TSDGEALTGA (426 aa)) are rifampicin-binding. The interval 410-430 (FVPSLPDAPPAGPRAGAAPEP) is disordered. A swivel phosphohistidine region spans residues 768-866 (GLPVSTGTVE…VHGTDGYIEI (99 aa)). Catalysis depends on histidine 826, which acts as the Tele-phosphohistidine intermediate.

This sequence belongs to the rifampicin phosphotransferase family.

The enzyme catalyses rifampicin + ATP + H2O = 21-phosphorifampicin + AMP + phosphate + 2 H(+). Its function is as follows. Catalyzes the phosphorylation of rifampicin, also known as rifampin (RIF), leading to its inactivation. Confers high level resistance to a variety of clinically used rifamycin antibiotics. Does not show phosphoenolpyruvate (PEP) synthase activity. In Streptomyces sviceus (strain ATCC 29083 / DSM 924 / JCM 4929 / NBRC 13980 / NCIMB 11184 / NRRL 5439 / UC 5370), this protein is Rifampicin phosphotransferase.